An 89-amino-acid polypeptide reads, in one-letter code: MALLQEKKHEIINAYQVHETDTGSADVQVAMLTERISKLSEHLKTNKKDHSSRRGLLKMIGQRKRLLTYIMKKDQAHYRELIKRLGIRG.

It belongs to the universal ribosomal protein uS15 family. Part of the 30S ribosomal subunit. Forms a bridge to the 50S subunit in the 70S ribosome, contacting the 23S rRNA.

Its function is as follows. One of the primary rRNA binding proteins, it binds directly to 16S rRNA where it helps nucleate assembly of the platform of the 30S subunit by binding and bridging several RNA helices of the 16S rRNA. In terms of biological role, forms an intersubunit bridge (bridge B4) with the 23S rRNA of the 50S subunit in the ribosome. This Acaryochloris marina (strain MBIC 11017) protein is Small ribosomal subunit protein uS15.